The following is a 248-amino-acid chain: MSGGGVIRGPAGNNDCRIYVGNLPPDIRTKDIEDVFYKYGAIRDIDLKNRRGGPPFAFVEFEDPRDAEDAVYGRDGYDYDGYRLRVEFPRSGRGTGRGGGGGGGGGAPRGRYGPPSRRSENRVVVSGLPPSGSWQDLKDHMREAGDVCYADVYRDGTGVVEFVRKEDMTYAVRKLDNTKFRSHEGETAYIRVKVDGPRSPSYGRSRSRSRSRSRNRSRSNSRSRSYSPRRSRGSPRYSPRHSRSRSRT.

Ser2 is modified (N-acetylserine). Ser2 carries the phosphoserine modification. One can recognise an RRM 1 domain in the interval 16–91 (CRIYVGNLPP…YRLRVEFPRS (76 aa)). A Glycyl lysine isopeptide (Lys-Gly) (interchain with G-Cter in SUMO2) cross-link involves residue Lys30. Lys38 is modified (N6-acetyllysine; alternate). Lys38 participates in a covalent cross-link: Glycyl lysine isopeptide (Lys-Gly) (interchain with G-Cter in SUMO2); alternate. The segment at 88 to 134 (FPRSGRGTGRGGGGGGGGGAPRGRYGPPSRRSENRVVVSGLPPSGSW) is disordered. 3 positions are modified to asymmetric dimethylarginine; alternate: Arg93, Arg97, and Arg109. An omega-N-methylarginine; alternate mark is found at Arg93, Arg97, and Arg109. Gly residues predominate over residues 93 to 108 (RGTGRGGGGGGGGGAP). Arg111 is subject to Omega-N-methylarginine. An RRM 2 domain is found at 121 to 195 (NRVVVSGLPP…ETAYIRVKVD (75 aa)). Position 133 is a phosphoserine (Ser133). The residue at position 179 (Lys179) is an N6-acetyllysine. Residues 191–248 (RVKVDGPRSPSYGRSRSRSRSRSRNRSRSNSRSRSYSPRRSRGSPRYSPRHSRSRSRT) form a disordered region. An interaction with SAFB1 region spans residues 198 to 247 (RSPSYGRSRSRSRSRSRNRSRSNSRSRSYSPRRSRGSPRYSPRHSRSRSR). Residues Ser199 and Ser201 each carry the phosphoserine modification. Phosphotyrosine is present on Tyr202. Ser205, Ser207, Ser209, Ser231, Ser234, and Ser238 each carry phosphoserine. Positions 205-248 (SRSRSRSRSRNRSRSNSRSRSYSPRRSRGSPRYSPRHSRSRSRT) are enriched in basic residues.

The protein belongs to the splicing factor SR family. In terms of assembly, consists of two polypeptides of p32 and p33. Identified in the spliceosome C complex. Component of a ribonucleoprotein complex containing mRNAs and RNA-binding proteins including DDX5, HNRNPH2 and SRSF1 as well as splicing regulator ARVCF. In vitro, self-associates and binds SRSF2, SNRNP70 and U2AF1 but not U2AF2. Binds SREK1/SFRS12. Interacts with SAFB/SAFB1. Interacts with PSIP1/LEDGF. Interacts with RSRC1 (via Arg/Ser-rich domain). Interacts with ZRSR2/U2AF1-RS2. Interacts with CCDC55 (via C-terminus). Interacts with SRPK1 and a sliding docking interaction is essential for its sequential and processive phosphorylation by SRPK1. Interacts with NXF1. Interacts with CCNL1, CCNL2 and CDK11B. Interacts with RRP1B. Interacts (when phosphorylated in its RS domain) with TNPO3; promoting nuclear import. Interacts with ILDR1 (via C-terminus) and ILDR2. Post-translationally, phosphorylated by CLK1, CLK2, CLK3 and CLK4. Phosphorylated by SRPK1 at multiple serines in its RS domain via a directional (C-terminal to N-terminal) and a dual-track mechanism incorporating both processive phosphorylation (in which the kinase stays attached to the substrate after each round of phosphorylation) and distributive phosphorylation steps (in which the kinase and substrate dissociate after each phosphorylation event). The RS domain of SRSF1 binds to a docking groove in the large lobe of the kinase domain of SRPK1 and this induces certain structural changes in SRPK1 and/or RRM 2 domain of SRSF1, allowing RRM 2 to bind the kinase and initiate phosphorylation. The cycles continue for several phosphorylation steps in a processive manner (steps 1-8) until the last few phosphorylation steps (approximately steps 9-12). During that time, a mechanical stress induces the unfolding of the beta-4 motif in RRM 2, which then docks at the docking groove of SRPK1. This also signals RRM 2 to begin to dissociate, which facilitates SRSF1 dissociation after phosphorylation is completed. In terms of processing, asymmetrically dimethylated at arginines, probably by PRMT1, methylation promotes localization to nuclear speckles.

It localises to the cytoplasm. The protein localises to the nucleus speckle. In terms of biological role, plays a role in preventing exon skipping, ensuring the accuracy of splicing and regulating alternative splicing. Interacts with other spliceosomal components, via the RS domains, to form a bridge between the 5'- and 3'-splice site binding components, U1 snRNP and U2AF. Can stimulate binding of U1 snRNP to a 5'-splice site-containing pre-mRNA. Binds to purine-rich RNA sequences, either the octamer, 5'-RGAAGAAC-3' (r=A or G) or the decamers, AGGACAGAGC/AGGACGAAGC. Binds preferentially to the 5'-CGAGGCG-3' motif in vitro. Three copies of the octamer constitute a powerful splicing enhancer in vitro, the ASF/SF2 splicing enhancer (ASE) which can specifically activate ASE-dependent splicing. May function as export adapter involved in mRNA nuclear export through the TAP/NXF1 pathway. This is Serine/arginine-rich splicing factor 1 (SRSF1) from Pongo abelii (Sumatran orangutan).